The chain runs to 755 residues: uncharacterized protein (755 aa).

Disordered regions lie at residues 1–44 (MAAP…AAAQ), 72–91 (AEHS…ATAQ), 99–174 (FSLS…IPHY), 393–467 (TTNV…SSSR), 523–545 (LPKT…EGGG), 584–672 (VSSS…LPSG), and 734–755 (QAAT…PRRK). Composition is skewed to low complexity over residues 10–25 (TTTQ…TTTT) and 35–44 (TTTGSGAAAQ). Low complexity-rich tracts occupy residues 112–130 (ISSS…NASS), 139–151 (SPDL…LSGS), and 393–412 (TTNV…TKST). Residues 429 to 446 (IEEDTIQFDDPGQGEDDN) show a composition bias toward acidic residues. Pro residues predominate over residues 452-462 (NTPPPPGPPPN). A compositionally biased stretch (gly residues) spans 536-545 (ATGGVTEGGG). A compositionally biased stretch (polar residues) spans 590–599 (LPQPQVATTI). Low complexity-rich tracts occupy residues 600–666 (TPQA…QTPQ) and 740–755 (SQPS…PRRK).

The protein belongs to the chlamydial CPn_0572/CT_456/TC_0741 family.

This is an uncharacterized protein from Chlamydia pneumoniae (Chlamydophila pneumoniae).